Consider the following 489-residue polypeptide: UDP-N-acetylmuramoyl-L-alanyl-D-glutamate--2,6-diaminopimelate ligase (489 aa).

A UDP-N-acetyl-alpha-D-muramoyl-L-alanyl-D-glutamate-binding site is contributed by Ser-30. 108–114 provides a ligand contact to ATP; that stretch reads GTNGKTT. Residues Asn-149, 150–151, Ser-177, Gln-183, and Arg-185 contribute to the UDP-N-acetyl-alpha-D-muramoyl-L-alanyl-D-glutamate site; that span reads TT. The residue at position 217 (Lys-217) is an N6-carboxylysine. Meso-2,6-diaminopimelate is bound by residues Arg-383, 407 to 410, Gly-459, and Glu-463; that span reads DNPR. Positions 407–410 match the Meso-diaminopimelate recognition motif motif; that stretch reads DNPR.

The protein belongs to the MurCDEF family. MurE subfamily. Requires Mg(2+) as cofactor. Carboxylation is probably crucial for Mg(2+) binding and, consequently, for the gamma-phosphate positioning of ATP.

Its subcellular location is the cytoplasm. The catalysed reaction is UDP-N-acetyl-alpha-D-muramoyl-L-alanyl-D-glutamate + meso-2,6-diaminopimelate + ATP = UDP-N-acetyl-alpha-D-muramoyl-L-alanyl-gamma-D-glutamyl-meso-2,6-diaminopimelate + ADP + phosphate + H(+). It participates in cell wall biogenesis; peptidoglycan biosynthesis. In terms of biological role, catalyzes the addition of meso-diaminopimelic acid to the nucleotide precursor UDP-N-acetylmuramoyl-L-alanyl-D-glutamate (UMAG) in the biosynthesis of bacterial cell-wall peptidoglycan. The sequence is that of UDP-N-acetylmuramoyl-L-alanyl-D-glutamate--2,6-diaminopimelate ligase from Geobacillus thermodenitrificans (strain NG80-2).